A 139-amino-acid chain; its full sequence is Centromere protein S (139 aa).

A disordered region spans residues 99-139 (ELASSNMEQKEKKKKKSSAAKGRKTEENETPVTESEDSNMA). Residues 110-120 (KKKKKSSAAKG) show a composition bias toward basic residues.

It belongs to the TAF9 family. CENP-S/MHF1 subfamily. As to quaternary structure, heterodimer with CENPX, sometimes called MHF; this interaction stabilizes both partners. MHF heterodimers can assemble to form tetrameric structures. MHF also coassemble with CENPT-CENPW heterodimers at centromeres to form the tetrameric CENP-T-W-S-X complex. Forms a discrete complex with FANCM and CENPX, called FANCM-MHF; this interaction, probably mediated by direct binding between CENPS and FANCM, leads to synergistic activation of double-stranded DNA binding and strongly stimulates FANCM-mediated DNA remodeling. Recruited by FANCM to the Fanconi anemia (FA) core complex, which consists of CENPS, CENPX, FANCA, FANCB, FANCC, FANCE, FANCF, FANCG, FANCL, FANCM, FAAP24 and FAAP100. The FA core complex associates with Bloom syndrome (BLM) complex, which consists of at least BLM, DNA topoisomerase 3-alpha (TOP3A), RMI1/BLAP75, RPA1/RPA70 and RPA2/RPA32. The super complex between FA and BLM is called BRAFT. Component of the CENPA-CAD complex, composed of CENPI, CENPK, CENPL, CENPO, CENPP, CENPQ, CENPR and CENPS. The CENPA-CAD complex is probably recruited on centromeres by the CENPA-NAC complex, at least composed of CENPA, CENPC, CENPH, CENPM, CENPN, CENPT and CENPU.

Its subcellular location is the nucleus. It is found in the chromosome. The protein localises to the centromere. It localises to the kinetochore. Functionally, DNA-binding component of the Fanconi anemia (FA) core complex. Required for the normal activation of the FA pathway, leading to monoubiquitination of the FANCI-FANCD2 complex in response to DNA damage, cellular resistance to DNA cross-linking drugs, and prevention of chromosomal breakage. In complex with CENPX (MHF heterodimer), crucial cofactor for FANCM in both binding and ATP-dependent remodeling of DNA. Stabilizes FANCM. In complex with CENPX and FANCM (but not other FANC proteins), rapidly recruited to blocked forks and promotes gene conversion at blocked replication forks. In complex with CENPT, CENPW and CENPX (CENP-T-W-S-X heterotetramer), involved in the formation of a functional kinetochore outer plate, which is essential for kinetochore-microtubule attachment and faithful mitotic progression. As a component of MHF and CENP-T-W-S-X complexes, binds DNA and bends it to form a nucleosome-like structure. DNA-binding function is fulfilled in the presence of CENPX, with the following preference for DNA substates: Holliday junction &gt; double-stranded &gt; splay arm &gt; single-stranded. Does not bind DNA on its own. The polypeptide is Centromere protein S (CENPS) (Gallus gallus (Chicken)).